Here is a 169-residue protein sequence, read N- to C-terminus: uncharacterized protein (169 aa).

A Nudix hydrolase domain is found at 28–157 (ELHLVVHVCI…EFIPYFFLNQ (130 aa)). Residues 65 to 87 (AGSALKGETSRQAAEREVKEELG) carry the Nudix box motif. Mg(2+)-binding residues include E81 and E85.

Belongs to the Nudix hydrolase family. Requires Mg(2+) as cofactor.

This is an uncharacterized protein from Listeria innocua serovar 6a (strain ATCC BAA-680 / CLIP 11262).